A 113-amino-acid chain; its full sequence is Integration host factor subunit alpha (113 aa).

It belongs to the bacterial histone-like protein family. Heterodimer of an alpha and a beta chain.

In terms of biological role, this protein is one of the two subunits of integration host factor, a specific DNA-binding protein that functions in genetic recombination as well as in transcriptional and translational control. This chain is Integration host factor subunit alpha, found in Rhodopseudomonas palustris (strain BisA53).